The following is a 208-amino-acid chain: Pyridoxine/pyridoxamine 5'-phosphate oxidase (208 aa).

FMN-binding positions include 53-58 (RTVLLK), 68-69 (YS), Lys75, and Gln100. Substrate is bound at residue Lys58. 3 residues coordinate substrate: Tyr118, Arg122, and Ser126. FMN contacts are provided by residues 135 to 136 (QS) and Trp180. 186-188 (RLH) lines the substrate pocket. An FMN-binding site is contributed by Arg190.

The protein belongs to the pyridoxamine 5'-phosphate oxidase family. Homodimer. The cofactor is FMN.

The catalysed reaction is pyridoxamine 5'-phosphate + O2 + H2O = pyridoxal 5'-phosphate + H2O2 + NH4(+). It catalyses the reaction pyridoxine 5'-phosphate + O2 = pyridoxal 5'-phosphate + H2O2. It functions in the pathway cofactor metabolism; pyridoxal 5'-phosphate salvage; pyridoxal 5'-phosphate from pyridoxamine 5'-phosphate: step 1/1. It participates in cofactor metabolism; pyridoxal 5'-phosphate salvage; pyridoxal 5'-phosphate from pyridoxine 5'-phosphate: step 1/1. In terms of biological role, catalyzes the oxidation of either pyridoxine 5'-phosphate (PNP) or pyridoxamine 5'-phosphate (PMP) into pyridoxal 5'-phosphate (PLP). This is Pyridoxine/pyridoxamine 5'-phosphate oxidase from Xylella fastidiosa (strain Temecula1 / ATCC 700964).